The primary structure comprises 476 residues: Nitrosuccinate lyase (476 aa).

Positions 137, 140, and 201 each coordinate fumarate. The Proton acceptor role is filled by S302. Residues K308 and N310 each contribute to the fumarate site. The active-site Proton donor is R341.

The protein belongs to the class-II fumarase/aspartase family. As to quaternary structure, homotetramer.

It carries out the reaction 2-nitrobutanedioate = fumarate + nitrite + H(+). It functions in the pathway antibiotic biosynthesis. Part of a gene cluster involved in the biosynthesis of cremeomycin, a light-sensitive o-diazoquinone with antibacterial and antiproliferative effects. Catalyzes the formation of nitrous acid from nitrosuccinic acid (2-nitrobutanedioate) by elimination of its nitro group. This is Nitrosuccinate lyase from Streptomyces cremeus.